A 1507-amino-acid polypeptide reads, in one-letter code: Lhr helicase/ probable uracil glycosylase (1507 aa).

The tract at residues 1–856 (MTTNGADPLG…ASLLFGYVGA (856 aa)) is lhr-Core. Positions 24, 31, 54, and 55 each coordinate ATP. One can recognise a Helicase ATP-binding domain in the interval 35-226 (WSAISEGNNT…FLSGQAPTTI (192 aa)). Positions 122, 131, 145, 148, and 152 each coordinate ssDNA. ATP-binding residues include D170 and E171. Residues 170-173 (DEVH) carry the DEAH box motif. Residues S253, W255, and R279 each coordinate ssDNA. A Helicase C-terminal domain is found at 257–451 (DVEERIVDLV…VLAQHTVAVA (195 aa)). Positions 377, 394, and 397 each coordinate ATP. SsDNA is bound by residues K410, Q518, R519, I528, W597, D600, and R777. A WH domain region spans residues 436 to 529 (PANPLDVLAQ…LAVTSGGAIP (94 aa)). Residues 530 to 856 (DRGMFTVYLA…ASLLFGYVGA (327 aa)) are domain 4. The segment at 857 to 1507 (FMYEGDSPLA…SRTPRGLRLR (651 aa)) is CTD.

The protein belongs to the Lhr helicase family. As to quaternary structure, monomer. Homooligomerizes, possibly a homotetramer. It depends on Ca(2+) as a cofactor.

The enzyme catalyses Couples ATP hydrolysis with the unwinding of duplex DNA by translocating in the 3'-5' direction.. It carries out the reaction ATP + H2O = ADP + phosphate + H(+). The catalysed reaction is Hydrolyzes single-stranded DNA or mismatched double-stranded DNA and polynucleotides, releasing free uracil.. In terms of biological role, a 3'-5' helicase involved in repair of at least 3 types of DNA cross-links, mitomycin C (MMC), cisplatin, and psoralen-UVA. Translocates 3'-to-5' on single-stranded (ss)DNA, unwinding any encountered duplex nucleic acid. A 3'-ssDNA loading strand of at least 15 nucleotides is required for helicase activity. An RNA:DNA hybrid with a 3'-ssDNA loading strand is an 8-fold better helicase substrate than 3'-tailed double-stranded (ds)DNA; substrates where the helicase loads on a 3'-ssRNA tail (DNA:RNA and RNA:RNA) are not unwound. Only (d)ATP is hydrolyzed by the protein, which has no ATPase activity in the absence of ssDNA or ssRNA. Arg-279 and Trp-597 are needed to couple ATP hydrolysis to mechanical work; a salt bridge between Arg-280 and Glu-550 closes a clamp around the ssDNA that is not large enough for dsDNA, while Ile-528 wedges between bases of the loading strand. Excises uracil residues from ssDNA. Uracil residues in DNA can arise as a result of misincorporation of dUMP residues by DNA polymerase or due to deamination of cytosine. The sequence is that of Lhr helicase/ probable uracil glycosylase from Mycolicibacterium smegmatis (strain ATCC 700084 / mc(2)155) (Mycobacterium smegmatis).